The sequence spans 206 residues: Cytochrome c oxidase assembly protein CtaG (206 aa).

The Cytoplasmic portion of the chain corresponds to 1–22 (MTEQPTNRNDVPRRGLGRDATV). The helical; Signal-anchor for type II membrane protein transmembrane segment at 23–43 (ASICGLVVALMVGASYAAVPF) threads the bilayer. Topologically, residues 44–206 (YNWFCRATGF…GEPDSRKGAL (163 aa)) are periplasmic.

It belongs to the COX11/CtaG family.

Its subcellular location is the cell inner membrane. In terms of biological role, exerts its effect at some terminal stage of cytochrome c oxidase synthesis, probably by being involved in the insertion of the copper B into subunit I. The sequence is that of Cytochrome c oxidase assembly protein CtaG from Rhodopseudomonas palustris (strain BisB18).